We begin with the raw amino-acid sequence, 419 residues long: Histidine--tRNA ligase (419 aa).

This sequence belongs to the class-II aminoacyl-tRNA synthetase family. In terms of assembly, homodimer.

It is found in the cytoplasm. The enzyme catalyses tRNA(His) + L-histidine + ATP = L-histidyl-tRNA(His) + AMP + diphosphate + H(+). The polypeptide is Histidine--tRNA ligase (Desulforamulus reducens (strain ATCC BAA-1160 / DSM 100696 / MI-1) (Desulfotomaculum reducens)).